The primary structure comprises 337 residues: Geranylgeranyl pyrophosphate synthase subD (337 aa).

Isopentenyl diphosphate-binding residues include K53, R56, and H85. Mg(2+) is bound by residues D92 and D96. R101 is a binding site for dimethylallyl diphosphate. Residue R102 participates in isopentenyl diphosphate binding. Dimethylallyl diphosphate contacts are provided by K179, T180, and Q219. D222 provides a ligand contact to Mg(2+). Positions 226, 236, and 246 each coordinate dimethylallyl diphosphate.

Belongs to the FPP/GGPP synthase family. Requires Mg(2+) as cofactor.

It catalyses the reaction isopentenyl diphosphate + dimethylallyl diphosphate = (2E)-geranyl diphosphate + diphosphate. It carries out the reaction isopentenyl diphosphate + (2E)-geranyl diphosphate = (2E,6E)-farnesyl diphosphate + diphosphate. The catalysed reaction is isopentenyl diphosphate + (2E,6E)-farnesyl diphosphate = (2E,6E,10E)-geranylgeranyl diphosphate + diphosphate. The protein operates within secondary metabolite biosynthesis; terpenoid biosynthesis. In terms of biological role, geranylgeranyl pyrophosphate synthase; part of the gene cluster that mediates the biosynthesis of the immunosuppressants subglutinols, meroterpenoids consisting of an alpha-pyrone (4-hydroxy-5,6-dimethyl-2-pyrone) moiety attached to a decalin core fused to a five-membered cyclic ether carrying a prenylside chain. The first step of the pathway is the synthesis of the alpha-pyrone moiety by the polyketide synthase subA via condensation of one acetyl-CoA starter unit with 3 malonyl-CoA units and 2 methylations. The alpha-pyrone is then combined with geranylgeranyl pyrophosphate (GGPP) formed by the GGPP synthase subD through the action of the prenyltransferase subC to yield a linear alpha-pyrone diterpenoid. Subsequent steps in the subglutinol biosynthetic pathway involve the decalin core formation, which is thought to be initiated by the epoxidation of the C10-C11 olefin by the FAD-dependent oxidoreductase subE. The following cyclization cascade would be catalyzed by the terpene cyclase subB. Lastly, the FAD-dependent dehydrogenase subF probably catalyzes the five-membered cyclic ether formation to complete the formation of subglutinol A. Subsequent redox reactions appear to give rise to subglutinol C and D, however, it remains unclear which enzymes are responsible for these transformations. SubD may have secondary function in the conversion of the identified subglutinols to subglutinol analog 45, which seems to be the major product of the cluster. In Metarhizium robertsii (strain ARSEF 23 / ATCC MYA-3075) (Metarhizium anisopliae (strain ARSEF 23)), this protein is Geranylgeranyl pyrophosphate synthase subD.